We begin with the raw amino-acid sequence, 486 residues long: ATP synthase subunit beta (486 aa).

170-177 (GGAGVGKT) serves as a coordination point for ATP.

This sequence belongs to the ATPase alpha/beta chains family. As to quaternary structure, F-type ATPases have 2 components, CF(1) - the catalytic core - and CF(0) - the membrane proton channel. CF(1) has five subunits: alpha(3), beta(3), gamma(1), delta(1), epsilon(1). CF(0) has three main subunits: a(1), b(2) and c(9-12). The alpha and beta chains form an alternating ring which encloses part of the gamma chain. CF(1) is attached to CF(0) by a central stalk formed by the gamma and epsilon chains, while a peripheral stalk is formed by the delta and b chains.

The protein resides in the cell membrane. The catalysed reaction is ATP + H2O + 4 H(+)(in) = ADP + phosphate + 5 H(+)(out). Produces ATP from ADP in the presence of a proton gradient across the membrane. The catalytic sites are hosted primarily by the beta subunits. The chain is ATP synthase subunit beta from Clavibacter michiganensis subsp. michiganensis (strain NCPPB 382).